The chain runs to 620 residues: Glutathione-regulated potassium-efflux system protein KefC (620 aa).

A run of 12 helical transmembrane segments spans residues 4-24 (HTLIQALIYLGSAALIVPIAV), 26-46 (LGLGSVLGYLIAGCIIGPWGL), 54-74 (SILHFAEIGVVLMLFIIGLEL), 90-110 (GALQMVICGGLLGLFCMLLGL), 114-134 (VAELIGMTLALSSTAIAMQAM), 149-169 (FAVLLFQDIAAIPLVAMIPLL), 178-198 (MGAFALSALKVAGALVLVVLL), 218-238 (VFSAVALFLVFGFGLLLEEVG), 270-290 (GLLLGLFFIGVGMSIDFGTLL), 294-314 (LRIVILLLGFLIIKIAMLWLI), 327-347 (WFAVLLGQGSEFAFVVFGAAQ), and 359-379 (SLTLAVALSMAATPILLVILN). The region spanning 399–518 (QPRVIIAGFG…AGVEKPERET (120 aa)) is the RCK N-terminal domain. Positions 597–620 (GWQGTEEGKHTGNMADEPETKPSS) are disordered.

It belongs to the monovalent cation:proton antiporter 2 (CPA2) transporter (TC 2.A.37) family. KefC subfamily. Homodimer. Interacts with the regulatory subunit KefF.

The protein resides in the cell inner membrane. Its function is as follows. Pore-forming subunit of a potassium efflux system that confers protection against electrophiles. Catalyzes K(+)/H(+) antiport. This chain is Glutathione-regulated potassium-efflux system protein KefC, found in Escherichia coli O8 (strain IAI1).